The chain runs to 124 residues: Magnetosome protein MamC (124 aa).

The Cytoplasmic segment spans residues 2-8 (PFHLAPY). A helical transmembrane segment spans residues 9-29 (LAKSVPGVGVLGALVGGAAAL). At 30-64 (AKNVRLLKEKRITNTEAAIDTGKETVGAGLATALS) the chain is on the lumenal side. Residues 36–56 (LKEKRITNTEAAIDTGKETVG) form an MIC, when fused with the C-terminus of maltose-binding protein (MBP) or expressed as a fragment, improves quality of iron particles during precipitation experiments, binds magnetite region. A helical membrane pass occupies residues 65–85 (AVAATAVGGGLVVSLGTALVA). Over 86–124 (GVAAKYAWDRGVDLVEKELNRGKAANGASDEDILRDELA) the chain is Cytoplasmic.

The protein belongs to the magnetosome MamC family. Probably interacts with MamA.

It is found in the magnetosome membrane. Its function is as follows. Probably involved in magnetite crystal growth. The lumenal domain may bind the magnetite crystals, affecting crystal size and shape. This chain is Magnetosome protein MamC, found in Paramagnetospirillum magneticum (strain ATCC 700264 / AMB-1) (Magnetospirillum magneticum).